A 341-amino-acid polypeptide reads, in one-letter code: L-threonine 3-dehydrogenase (341 aa).

Cys-38 is a Zn(2+) binding site. Catalysis depends on charge relay system residues Thr-40 and His-43. His-63, Glu-64, Cys-93, Cys-96, Cys-99, and Cys-107 together coordinate Zn(2+). Residues Ile-175, Asp-195, Arg-200, 262 to 264 (LGI), and 286 to 287 (IY) contribute to the NAD(+) site.

It belongs to the zinc-containing alcohol dehydrogenase family. As to quaternary structure, homotetramer. It depends on Zn(2+) as a cofactor.

It is found in the cytoplasm. It catalyses the reaction L-threonine + NAD(+) = (2S)-2-amino-3-oxobutanoate + NADH + H(+). It participates in amino-acid degradation; L-threonine degradation via oxydo-reductase pathway; glycine from L-threonine: step 1/2. In terms of biological role, catalyzes the NAD(+)-dependent oxidation of L-threonine to 2-amino-3-ketobutyrate. The protein is L-threonine 3-dehydrogenase of Escherichia coli O139:H28 (strain E24377A / ETEC).